Reading from the N-terminus, the 106-residue chain is Nucleoid-associated protein Exig_0019 (106 aa).

Residues 1–16 (MRGMGNMNNMMKQMQK) are compositionally biased toward low complexity. A disordered region spans residues 1–23 (MRGMGNMNNMMKQMQKMQKDMAK).

This sequence belongs to the YbaB/EbfC family. Homodimer.

It localises to the cytoplasm. The protein localises to the nucleoid. Binds to DNA and alters its conformation. May be involved in regulation of gene expression, nucleoid organization and DNA protection. The protein is Nucleoid-associated protein Exig_0019 of Exiguobacterium sibiricum (strain DSM 17290 / CCUG 55495 / CIP 109462 / JCM 13490 / 255-15).